A 294-amino-acid polypeptide reads, in one-letter code: MPHTQITLDCAQSQVPRVEALLEALGALAITLSEPDDEEILEPGPGEQRLWSHLRLTALFDAATVDPLRLQARVAEVLGAPPRGWRVERLVDRAWERAWMDDFHPMRFGDRLWVVPWGQTPPAAEAVNLRLDPGLAFGTGTHPTTALCLRWLDGLPLQADTRLVDYGCGSGILAVAGCLLGAGHCTAVDNDPQARQATADNARRNGVGERIRVQGPGPLPRAGADVLVANILARVLVAMAGELSPSVRPGGRIALSGILRGQVDQVRACYSSWFEMERPEYQGDWALLAGTRRG.

The S-adenosyl-L-methionine site is built by Thr145, Gly167, Asp189, and Asn230.

The protein belongs to the methyltransferase superfamily. PrmA family.

The protein resides in the cytoplasm. It catalyses the reaction L-lysyl-[protein] + 3 S-adenosyl-L-methionine = N(6),N(6),N(6)-trimethyl-L-lysyl-[protein] + 3 S-adenosyl-L-homocysteine + 3 H(+). Functionally, methylates ribosomal protein L11. The chain is Ribosomal protein L11 methyltransferase from Alkalilimnicola ehrlichii (strain ATCC BAA-1101 / DSM 17681 / MLHE-1).